The primary structure comprises 361 residues: 3-dehydroquinate synthase (361 aa).

NAD(+)-binding positions include Asn41, 70 to 75, 104 to 108, 128 to 129, Lys141, Lys150, 150 to 151, and 168 to 171; these read DGEQYK, GVIGD, TT, KN, and CLTT. Glu183, His246, and His263 together coordinate Zn(2+).

The protein belongs to the sugar phosphate cyclases superfamily. Dehydroquinate synthase family. It depends on NAD(+) as a cofactor. Co(2+) is required as a cofactor. Zn(2+) serves as cofactor.

The protein resides in the cytoplasm. The catalysed reaction is 7-phospho-2-dehydro-3-deoxy-D-arabino-heptonate = 3-dehydroquinate + phosphate. It functions in the pathway metabolic intermediate biosynthesis; chorismate biosynthesis; chorismate from D-erythrose 4-phosphate and phosphoenolpyruvate: step 2/7. Its function is as follows. Catalyzes the conversion of 3-deoxy-D-arabino-heptulosonate 7-phosphate (DAHP) to dehydroquinate (DHQ). In Vibrio cholerae serotype O1 (strain ATCC 39315 / El Tor Inaba N16961), this protein is 3-dehydroquinate synthase.